The chain runs to 186 residues: Elongation factor P (186 aa).

It belongs to the elongation factor P family.

It is found in the cytoplasm. The protein operates within protein biosynthesis; polypeptide chain elongation. Involved in peptide bond synthesis. Stimulates efficient translation and peptide-bond synthesis on native or reconstituted 70S ribosomes in vitro. Probably functions indirectly by altering the affinity of the ribosome for aminoacyl-tRNA, thus increasing their reactivity as acceptors for peptidyl transferase. The polypeptide is Elongation factor P (Prochlorococcus marinus subsp. pastoris (strain CCMP1986 / NIES-2087 / MED4)).